An 82-amino-acid polypeptide reads, in one-letter code: Small ribosomal subunit protein bS18 (82 aa).

A disordered region spans residues 1 to 20 (MVDINQIPTRRPFHRRRKTC).

Belongs to the bacterial ribosomal protein bS18 family. Part of the 30S ribosomal subunit. Forms a tight heterodimer with protein bS6.

Its function is as follows. Binds as a heterodimer with protein bS6 to the central domain of the 16S rRNA, where it helps stabilize the platform of the 30S subunit. In Chelativorans sp. (strain BNC1), this protein is Small ribosomal subunit protein bS18.